The chain runs to 302 residues: Homoserine O-acetyltransferase (302 aa).

The active-site Acyl-thioester intermediate is the Cys-142. Positions 163 and 192 each coordinate substrate. Residue His-235 is the Proton acceptor of the active site. Glu-237 is an active-site residue. Residue Arg-249 participates in substrate binding.

This sequence belongs to the MetA family.

It is found in the cytoplasm. The catalysed reaction is L-homoserine + acetyl-CoA = O-acetyl-L-homoserine + CoA. Its pathway is amino-acid biosynthesis; L-methionine biosynthesis via de novo pathway; O-acetyl-L-homoserine from L-homoserine: step 1/1. Functionally, transfers an acetyl group from acetyl-CoA to L-homoserine, forming acetyl-L-homoserine. The polypeptide is Homoserine O-acetyltransferase (Geobacillus kaustophilus).